The primary structure comprises 1040 residues: Multidrug resistance protein MdtB (1040 aa).

12 helical membrane passes run 25–45 (LLMA…PVAA), 347–367 (LMLA…NIPA), 369–389 (IIPG…MVFL), 396–416 (LTLM…IVVI), 440–460 (IGFT…PLLF), 472–492 (FAVT…TLTP), 537–557 (WLTL…WIVI), 863–883 (LGST…VLGV), 888–908 (FIHP…ALLA), 910–930 (IIAG…LIGI), 968–988 (ILMT…STGV), and 998–1018 (IAMV…TPVI).

This sequence belongs to the resistance-nodulation-cell division (RND) (TC 2.A.6) family. MdtB subfamily. Part of a tripartite efflux system composed of MdtA, MdtB and MdtC. MdtB forms a heteromultimer with MdtC.

Its subcellular location is the cell inner membrane. This Salmonella paratyphi A (strain ATCC 9150 / SARB42) protein is Multidrug resistance protein MdtB.